Consider the following 183-residue polypeptide: UPF0316 protein GTNG_0803 (183 aa).

Transmembrane regions (helical) follow at residues 5–25 (IVLVLALQLVYVPILTLRTIF), 33–53 (LAAFMGFLEALIYVFGLSIVF), and 59–79 (YIVMIVYAAGFGARGFLLEDI).

This sequence belongs to the UPF0316 family.

It is found in the cell membrane. This Geobacillus thermodenitrificans (strain NG80-2) protein is UPF0316 protein GTNG_0803.